The primary structure comprises 2146 residues: YLP motif-containing protein 1 (2146 aa).

Disordered regions lie at residues 1 to 381 and 562 to 880; these read MYPN…ARLK and PPVM…FKMQ. Residues 14–26 show a composition bias toward pro residues; it reads YPPPPVPPPPPVA. 2 stretches are compositionally biased toward low complexity: residues 27–48 and 58–79; these read LPEA…PSSS and LAQL…LQPH. Pro residues-rich tracts occupy residues 80 to 92, 101 to 113, 147 to 157, 165 to 175, and 183 to 194; these read HLPP…PPVM, QPPP…PPGP, PESPPVPPGSY, MPPPQPPPSYY, and YLPPAQPSPSQS. Residues 195–237 are compositionally biased toward low complexity; it reads PPSQSYLAPTPSYSSSSSSSQSYLSHSQSYLPSSQASPSRPSQ. Polar residues-rich tracts occupy residues 256-279 and 286-308; these read NKTT…QQQA and STMT…LQQR. A compositionally biased stretch (basic residues) spans 309 to 319; it reads TKVHLPGHKKG. A compositionally biased stretch (basic and acidic residues) spans 325-334; sequence DTPEPVKEEV. Pro residues-rich tracts occupy residues 349 to 368, 562 to 579, and 586 to 642; these read EEPP…PPEE, PPVM…PGMP, and GPPP…PQGI. The segment covering 643-663 has biased composition (low complexity); sequence PPQLTAAPVPPASSSQSSQVP. Polar residues predominate over residues 692–702; sequence AGPSEQVNSKA. Lysine 735 is subject to N6-methyllysine. Residue serine 756 is modified to Phosphoserine. Basic and acidic residues predominate over residues 758–806; the sequence is RGPRFDGPRRFEDLGSRCEGPRPKGPRFEGNRPDGPRPRYEGHPAEGTK. Arginine 814 is modified (omega-N-methylarginine). Polar residues-rich tracts occupy residues 820–835 and 868–880; these read FYIT…QSGP and DTSS…FKMQ. Residue serine 829 is modified to Phosphoserine. Omega-N-methylarginine is present on arginine 831. A Glycyl lysine isopeptide (Lys-Gly) (interchain with G-Cter in SUMO2) cross-link involves residue lysine 891. Disordered stretches follow at residues 895–1211 and 1243–1351; these read AAQS…GRNA and NRED…DDRW. Polar residues-rich tracts occupy residues 896–909 and 923–933; these read AQSN…QQEP and NWDQNVQSMET. A Glycyl lysine isopeptide (Lys-Gly) (interchain with G-Cter in SUMO1); alternate cross-link involves residue lysine 983. Lysine 983 participates in a covalent cross-link: Glycyl lysine isopeptide (Lys-Gly) (interchain with G-Cter in SUMO2); alternate. Composition is skewed to basic and acidic residues over residues 994 to 1012, 1027 to 1036, and 1053 to 1093; these read NNQD…RLEG, RMEDTRDKGL, and KQED…REKV. Lysine 1053 participates in a covalent cross-link: Glycyl lysine isopeptide (Lys-Gly) (interchain with G-Cter in SUMO1); alternate. A Glycyl lysine isopeptide (Lys-Gly) (interchain with G-Cter in SUMO2); alternate cross-link involves residue lysine 1053. 2 positions are modified to phosphoserine: serine 1100 and serine 1119. Basic and acidic residues-rich tracts occupy residues 1129–1211 and 1243–1264; these read GSRE…GRNA and NRED…RGPW. Acidic residues predominate over residues 1266-1276; that stretch reads DDWERDQDMDE. Over residues 1277 to 1328 the composition is skewed to basic and acidic residues; sequence DYNREMERDMDRDVDRISRPMDMYDRSLDNEWDRDYGRPLDEQESQFRERDI. Over residues 1330–1342 the composition is skewed to pro residues; that stretch reads SLPPLPPLPPLPP. A Phosphoserine modification is found at serine 1402. 3 disordered regions span residues 1407 to 1438, 1469 to 1573, and 1602 to 1828; these read PSDV…SLDS, QKEQ…EQER, and IPSA…PPGR. Residues 1417 to 1430 are compositionally biased toward low complexity; that stretch reads AEHMPSSHHSSEMM. Over residues 1469 to 1480 the composition is skewed to basic and acidic residues; that stretch reads QKEQLQKMKDFG. A compositionally biased stretch (pro residues) spans 1505–1520; that stretch reads MYPPPGSYRPPPPMGK. The span at 1521-1539 shows a compositional bias: low complexity; it reads PPGSIVRPSAPPARSSVPV. Composition is skewed to pro residues over residues 1540-1562 and 1606-1636; these read TRPP…PPVI and PVLP…PPPV. Residue lysine 1652 forms a Glycyl lysine isopeptide (Lys-Gly) (interchain with G-Cter in SUMO2) linkage. Composition is skewed to basic and acidic residues over residues 1662–1696, 1704–1774, 1783–1793, and 1809–1828; these read ITLR…EPYF, ADHR…DRPV, GERRTYPEERM, and RVEK…PPGR. Lysine 1710 participates in a covalent cross-link: Glycyl lysine isopeptide (Lys-Gly) (interchain with G-Cter in SUMO2). An involved in interaction with PPP1CA region spans residues 2096-2103; that stretch reads KKRVRWAD.

In terms of assembly, interacts with PPP1CA and NCOA5. Forms a complex with ILF2, ILF3, KHDRBS1, RBMX, NCOA5 and PPP1CA. Expressed in neuronal, neuroblastoma and embryonic kidney cell lines (at protein level).

Its subcellular location is the nucleus. It localises to the nucleus speckle. In terms of biological role, plays a role in the reduction of telomerase activity during differentiation of embryonic stem cells by binding to the core promoter of TERT and controlling its down-regulation. The sequence is that of YLP motif-containing protein 1 (YLPM1) from Homo sapiens (Human).